The sequence spans 154 residues: MRILGIDPGLARVGYGVIDTSNGQQQMLDCGIIRTNPGIDDGVRMVEIASDLRQLIRRWKPQLAAVEKFFFYRSSTTISVVQARGVIIMTLARFRVPMVEFPPMQIKLALAGSGHAEKDEVLDAVMRELNLDQPPRPDDAADALAIALTGWFQR.

Residues aspartate 7, glutamate 67, and aspartate 139 contribute to the active site. Positions 7, 67, and 139 each coordinate Mg(2+).

This sequence belongs to the RuvC family. Homodimer which binds Holliday junction (HJ) DNA. The HJ becomes 2-fold symmetrical on binding to RuvC with unstacked arms; it has a different conformation from HJ DNA in complex with RuvA. In the full resolvosome a probable DNA-RuvA(4)-RuvB(12)-RuvC(2) complex forms which resolves the HJ. It depends on Mg(2+) as a cofactor.

It is found in the cytoplasm. It carries out the reaction Endonucleolytic cleavage at a junction such as a reciprocal single-stranded crossover between two homologous DNA duplexes (Holliday junction).. In terms of biological role, the RuvA-RuvB-RuvC complex processes Holliday junction (HJ) DNA during genetic recombination and DNA repair. Endonuclease that resolves HJ intermediates. Cleaves cruciform DNA by making single-stranded nicks across the HJ at symmetrical positions within the homologous arms, yielding a 5'-phosphate and a 3'-hydroxyl group; requires a central core of homology in the junction. The consensus cleavage sequence is 5'-(A/T)TT(C/G)-3'. Cleavage occurs on the 3'-side of the TT dinucleotide at the point of strand exchange. HJ branch migration catalyzed by RuvA-RuvB allows RuvC to scan DNA until it finds its consensus sequence, where it cleaves and resolves the cruciform DNA. The polypeptide is Crossover junction endodeoxyribonuclease RuvC (Prochlorococcus marinus (strain MIT 9303)).